A 301-amino-acid polypeptide reads, in one-letter code: Probable 5-dehydro-4-deoxyglucarate dehydratase (301 aa).

Belongs to the DapA family.

It catalyses the reaction 5-dehydro-4-deoxy-D-glucarate + H(+) = 2,5-dioxopentanoate + CO2 + H2O. Its pathway is carbohydrate acid metabolism; D-glucarate degradation; 2,5-dioxopentanoate from D-glucarate: step 2/2. The chain is Probable 5-dehydro-4-deoxyglucarate dehydratase from Xanthobacter autotrophicus (strain ATCC BAA-1158 / Py2).